The sequence spans 471 residues: Eremophilane O-acetyltransferase ORF8 (471 aa).

It belongs to the fumigaclavine B O-acetyltransferase family. In terms of assembly, monomer.

It functions in the pathway sesquiterpene biosynthesis. O-acetyltransferase; part of the gene cluster that mediates the biosynthesis of PR-toxin, a bicyclic sesquiterpene belonging to the eremophilane class and acting as a mycotoxin. The first step of the pathway is catalyzed by the aristolochene synthase which performs the cyclization of trans,trans-farnesyl diphosphate (FPP) to the bicyclic sesquiterpene aristolochene. Following the formation of aristolochene, the non-oxygenated aristolochene is converted to the trioxygenated intermediate eremofortin B, via 7-epi-neopetasone. This conversion appears to involve three enzymes, a hydroxysterol oxidase-like enzyme, the quinone-oxidase prx3 that forms the quinone-type-structure in the bicyclic nucleus of aristolochene with the C8-oxo group and the C-3 hydroxyl group, and the P450 monooxygenase ORF6 that introduces the epoxide at the double bond between carbons 1 and 2. No monoxy or dioxy-intermediates have been reported to be released to the broth, so these three early oxidative reactions may be coupled together. Eremofortin B is further oxidized by another P450 monooxygenase, that introduces a second epoxide between carbons 7 and 11 prior to acetylation to eremofortin A by the acetyltransferase ORF8. The second epoxidation may be performed by a second P450 monooxygenase. After the acetylation step, eremofortin A is converted to eremofortin C and then to PR-toxin. First the conversion of eremofortin A to eremofortin C proceeds by oxidation of the side chain of the molecule at C-12 and is catalyzed by the short-chain oxidoreductase prx1. The cytochrome P450 monooxygenase ORF6 is probably also involved in this step. The primary alcohol formed at C-12 is finally oxidized by the short-chain alcohol dehydrogenase prx4 that forms PR-toxin. The sequence is that of Eremophilane O-acetyltransferase ORF8 from Penicillium roqueforti (strain FM164).